Here is a 162-residue protein sequence, read N- to C-terminus: Phosphopantetheine adenylyltransferase (162 aa).

T9 lines the substrate pocket. ATP-binding positions include 9 to 10 (TF) and H17. Substrate is bound by residues K41, L73, and R87. Residues 88 to 90 (GLR), E98, and 123 to 129 (FAFLSST) each bind ATP.

The protein belongs to the bacterial CoaD family. Homohexamer. Mg(2+) is required as a cofactor.

Its subcellular location is the cytoplasm. It catalyses the reaction (R)-4'-phosphopantetheine + ATP + H(+) = 3'-dephospho-CoA + diphosphate. It participates in cofactor biosynthesis; coenzyme A biosynthesis; CoA from (R)-pantothenate: step 4/5. In terms of biological role, reversibly transfers an adenylyl group from ATP to 4'-phosphopantetheine, yielding dephospho-CoA (dPCoA) and pyrophosphate. The polypeptide is Phosphopantetheine adenylyltransferase (Vibrio atlanticus (strain LGP32) (Vibrio splendidus (strain Mel32))).